The sequence spans 122 residues: Large ribosomal subunit protein uL14c (122 aa).

The protein belongs to the universal ribosomal protein uL14 family. As to quaternary structure, part of the 50S ribosomal subunit.

The protein resides in the plastid. It localises to the chloroplast. Binds to 23S rRNA. This Illicium oligandrum (Star anise) protein is Large ribosomal subunit protein uL14c.